A 570-amino-acid polypeptide reads, in one-letter code: piRNA biogenesis protein EXD1 (570 aa).

In terms of domain architecture, 3'-5' exonuclease spans 135-307 (YTVIDQFQQK…LPPSLLKILA (173 aa)). Composition is skewed to basic and acidic residues over residues 433–442 (DEKFLDKESK) and 453–465 (PRKE…DSKN). Positions 433–485 (DEKFLDKESKQTTAKSQIVPPRKEGEAHKDSKNKPGCWESAGPEDPRAQKAHA) are disordered.

It belongs to the EXD1 family. Homodimer. Component of the PET complex, at least composed of EXD1, PIWIL2, TDRD12 and piRNAs.

It is found in the cytoplasm. In terms of biological role, RNA-binding component of the PET complex, a multiprotein complex required for the processing of piRNAs during spermatogenesis. The piRNA metabolic process mediates the repression of transposable elements during meiosis by forming complexes composed of piRNAs and Piwi proteins and governs the methylation and subsequent repression of transposable elements, preventing their mobilization, which is essential for the germline integrity. The PET complex is required during the secondary piRNAs metabolic process for the PIWIL2 slicing-triggered loading of PIWIL4 piRNAs. In the PET complex, EXD1 probably acts as an RNA adapter. EXD1 is an inactive exonuclease. This is piRNA biogenesis protein EXD1 (Exd1) from Mus musculus (Mouse).